Here is a 393-residue protein sequence, read N- to C-terminus: Protein TsgA (393 aa).

12 consecutive transmembrane segments (helical) span residues 11-31 (WISF…GMVM), 51-71 (FLNA…EIVP), 78-98 (FGFL…SLAL), 101-121 (AAMF…TFLV), 134-154 (LLFT…IAAF), 162-182 (WYWV…LTFG), 206-226 (IGVL…LGFI), 245-265 (TLVS…SFIL), 273-293 (ILTV…TGTP), 297-317 (AWSI…IITL), 332-352 (FVLT…GPIV), and 361-381 (LLTA…LGFV).

Belongs to the major facilitator superfamily. TsgA family.

It is found in the cell inner membrane. The protein is Protein TsgA of Escherichia coli O139:H28 (strain E24377A / ETEC).